The sequence spans 591 residues: V-type ATP synthase alpha chain (591 aa).

ATP is bound at residue 242–249 (GPFGAGKT).

Belongs to the ATPase alpha/beta chains family.

The catalysed reaction is ATP + H2O + 4 H(+)(in) = ADP + phosphate + 5 H(+)(out). Functionally, produces ATP from ADP in the presence of a proton gradient across the membrane. The V-type alpha chain is a catalytic subunit. The chain is V-type ATP synthase alpha chain from Chlamydia caviae (strain ATCC VR-813 / DSM 19441 / 03DC25 / GPIC) (Chlamydophila caviae).